Consider the following 1105-residue polypeptide: Carbamoyl phosphate synthase large chain (1105 aa).

Residues 1–402 (MPKRDDIEKV…ALGKAVRSLE (402 aa)) are carboxyphosphate synthetic domain. 12 residues coordinate ATP: arginine 129, arginine 169, glycine 175, glycine 176, lysine 208, valine 210, glutamate 215, glycine 241, isoleucine 242, histidine 243, glutamine 285, and glutamate 299. Residues 133-328 (KTAMKNCGLE…IAKISALLAV (196 aa)) enclose the ATP-grasp 1 domain. Residues glutamine 285, glutamate 299, and asparagine 301 each coordinate Mg(2+). Mn(2+) is bound by residues glutamine 285, glutamate 299, and asparagine 301. The tract at residues 403-542 (LDIAPKLDLR…STYNGMENET (140 aa)) is oligomerization domain. Residues 543–945 (IPSKRRKIMV…AFAKAQLSAD (403 aa)) form a carbamoyl phosphate synthetic domain region. One can recognise an ATP-grasp 2 domain in the interval 667–858 (AKFLKQSGLS…VAKIAAKTII (192 aa)). ATP is bound by residues arginine 703, lysine 742, leucine 744, glutamate 749, glycine 774, isoleucine 775, histidine 776, serine 777, glutamine 817, and glutamate 829. Residues glutamine 817, glutamate 829, and asparagine 831 each coordinate Mg(2+). Mn(2+) contacts are provided by glutamine 817, glutamate 829, and asparagine 831. One can recognise an MGS-like domain in the interval 940–1101 (AQLSADGIST…QDIFYAQQNT (162 aa)). An allosteric domain region spans residues 946–1105 (GISTKSLLVT…YAQQNTLLKK (160 aa)).

It belongs to the CarB family. As to quaternary structure, composed of two chains; the small (or glutamine) chain promotes the hydrolysis of glutamine to ammonia, which is used by the large (or ammonia) chain to synthesize carbamoyl phosphate. Tetramer of heterodimers (alpha,beta)4. It depends on Mg(2+) as a cofactor. The cofactor is Mn(2+).

It catalyses the reaction hydrogencarbonate + L-glutamine + 2 ATP + H2O = carbamoyl phosphate + L-glutamate + 2 ADP + phosphate + 2 H(+). The catalysed reaction is hydrogencarbonate + NH4(+) + 2 ATP = carbamoyl phosphate + 2 ADP + phosphate + 2 H(+). The protein operates within amino-acid biosynthesis; L-arginine biosynthesis; carbamoyl phosphate from bicarbonate: step 1/1. Its pathway is pyrimidine metabolism; UMP biosynthesis via de novo pathway; (S)-dihydroorotate from bicarbonate: step 1/3. Its function is as follows. Large subunit of the glutamine-dependent carbamoyl phosphate synthetase (CPSase). CPSase catalyzes the formation of carbamoyl phosphate from the ammonia moiety of glutamine, carbonate, and phosphate donated by ATP, constituting the first step of 2 biosynthetic pathways, one leading to arginine and/or urea and the other to pyrimidine nucleotides. The large subunit (synthetase) binds the substrates ammonia (free or transferred from glutamine from the small subunit), hydrogencarbonate and ATP and carries out an ATP-coupled ligase reaction, activating hydrogencarbonate by forming carboxy phosphate which reacts with ammonia to form carbamoyl phosphate. This Pseudothermotoga lettingae (strain ATCC BAA-301 / DSM 14385 / NBRC 107922 / TMO) (Thermotoga lettingae) protein is Carbamoyl phosphate synthase large chain.